A 189-amino-acid chain; its full sequence is Interleukin-23 subunit alpha (189 aa).

An N-terminal signal peptide occupies residues 1-19; the sequence is MLGSRAVMLLLLLPWTAQG. Cys-77 and Cys-89 are oxidised to a cystine.

The protein belongs to the IL-6 superfamily. As to quaternary structure, heterodimer with IL12B; disulfide-linked. The heterodimer is known as interleukin IL-23. Interacts with IL23R; this interaction enables recruitment of IL12RB1. In terms of tissue distribution, secreted by activated dendritic and phagocytic cells and keratinocytes. Also expressed by dermal Langerhans cells (at protein level).

The protein localises to the secreted. Associates with IL12B to form the pro-inflammatory cytokine IL-23 that plays different roles in innate and adaptive immunity. Released by antigen-presenting cells such as dendritic cells or macrophages, binds to a heterodimeric receptor complex composed of IL12RB1 and IL23R to activate JAK2 and TYK2 which then phosphorylate the receptor to form a docking site leading to the phosphorylation of STAT3 and STAT4. This process leads to activation of several pathways including p38 MAPK or NF-kappa-B and promotes the production of pro-inflammatory cytokines such as interleukin-17A/IL17A. In turn, participates in the early and effective intracellular bacterial clearance. Promotes the expansion and survival of T-helper 17 cells, a CD4-positive helper T-cell subset that produces IL-17, as well as other IL-17-producing cells. The sequence is that of Interleukin-23 subunit alpha (IL23A) from Homo sapiens (Human).